The chain runs to 748 residues: E3 ubiquitin-protein ligase SMURF2 (748 aa).

Residues 1-119 (MSNPGGRRNG…TGYQRLDLCK (119 aa)) form the C2 domain. A Glycyl lysine isopeptide (Lys-Gly) (interchain with G-Cter in ubiquitin) cross-link involves residue lysine 119. WW domains follow at residues 157-190 (NDLP…RPTR), 251-284 (PDLP…DPRV), and 297-330 (GPLP…DPRL). Residues 414–748 (RPKDLWKRLM…IEETCGFAVE (335 aa)) enclose the HECT domain. Cysteine 716 (glycyl thioester intermediate) is an active-site residue.

Interacts (via WW domains) with SMAD1. Interacts (via WW domains) with SMAD2 (via PY-motif). Interacts (via WW domains) with SMAD3 (via PY-motif). Interacts with SMAD6. Interacts with SMAD7 (via PY-motif) and TGFBR1; SMAD7 recruits SMURF2 to the TGF-beta receptor and regulates its degradation. Does not interact with SMAD4; SMAD4 lacks a PY-motif. Interacts with AIMP1. Interacts with NDFIP1 and NDFIP2; this interaction activates the E3 ubiquitin-protein ligase. Interacts with TTC3. In terms of processing, auto-ubiquitinated and ubiquitinated in the presence of RNF11 and UBE2D1. Ubiquitinated by the SCF(FBXL15) complex and TTC3, leading to its degradation by the proteasome. 'Lys-48'-linked polyubiquitination mediated by TRAF4 at Lys-119 leads to SMURF2 proteasomal degradation.

The protein localises to the nucleus. The protein resides in the cytoplasm. It localises to the cell membrane. It is found in the membrane raft. It catalyses the reaction S-ubiquitinyl-[E2 ubiquitin-conjugating enzyme]-L-cysteine + [acceptor protein]-L-lysine = [E2 ubiquitin-conjugating enzyme]-L-cysteine + N(6)-ubiquitinyl-[acceptor protein]-L-lysine.. It participates in protein modification; protein ubiquitination. Its activity is regulated as follows. Activated by NDFIP1- and NDFIP2-binding. Functionally, E3 ubiquitin-protein ligase which accepts ubiquitin from an E2 ubiquitin-conjugating enzyme in the form of a thioester and then directly transfers the ubiquitin to targeted substrates. Interacts with SMAD7 to trigger SMAD7-mediated transforming growth factor beta/TGF-beta receptor ubiquitin-dependent degradation, thereby down-regulating TGF-beta signaling. In addition, interaction with SMAD7 activates autocatalytic degradation, which is prevented by interaction with AIMP1. Also forms a stable complex with TGF-beta receptor-mediated phosphorylated SMAD1, SMAD2 and SMAD3, and targets SMAD1 and SMAD2 for ubiquitination and proteasome-mediated degradation. SMAD2 may recruit substrates, such as SNON, for ubiquitin-dependent degradation. Negatively regulates TGFB1-induced epithelial-mesenchymal transition and myofibroblast differentiation. This chain is E3 ubiquitin-protein ligase SMURF2, found in Mus musculus (Mouse).